The following is a 116-amino-acid chain: UPF0342 protein RBAM_010030 (116 aa).

It belongs to the UPF0342 family.

The sequence is that of UPF0342 protein RBAM_010030 from Bacillus velezensis (strain DSM 23117 / BGSC 10A6 / LMG 26770 / FZB42) (Bacillus amyloliquefaciens subsp. plantarum).